The primary structure comprises 485 residues: uncharacterized protein (485 aa).

The protein resides in the virion. This is an uncharacterized protein from Acanthamoeba polyphaga mimivirus (APMV).